Consider the following 203-residue polypeptide: MTLVPYVVEDTGRGERAMDIYSRLLKDRIVMIGQEITEPLANTVIAQLLFLMSEDPQKDIKVFINSPGGYITAGLAIYDTIRFLGCDVNTYCIGQAASMGALLLSAGTKGKRYALPHSRMMIHQPSGGIIGTSADIQLQAAEILTLKKHLANILSECTGQPVEKIIEDSERDFFMGAEDAISYGLIDKVVSSAKDTKDKDTIS.

The active-site Nucleophile is Ser98. His123 is an active-site residue.

Belongs to the peptidase S14 family. Fourteen ClpP subunits assemble into 2 heptameric rings which stack back to back to give a disk-like structure with a central cavity, resembling the structure of eukaryotic proteasomes.

The protein resides in the cytoplasm. It catalyses the reaction Hydrolysis of proteins to small peptides in the presence of ATP and magnesium. alpha-casein is the usual test substrate. In the absence of ATP, only oligopeptides shorter than five residues are hydrolyzed (such as succinyl-Leu-Tyr-|-NHMec, and Leu-Tyr-Leu-|-Tyr-Trp, in which cleavage of the -Tyr-|-Leu- and -Tyr-|-Trp bonds also occurs).. In terms of biological role, cleaves peptides in various proteins in a process that requires ATP hydrolysis. Has a chymotrypsin-like activity. Plays a major role in the degradation of misfolded proteins. The sequence is that of ATP-dependent Clp protease proteolytic subunit 1 from Chlamydia felis (strain Fe/C-56) (Chlamydophila felis).